Here is a 302-residue protein sequence, read N- to C-terminus: Sulfate adenylyltransferase subunit 2 (302 aa).

The tract at residues 280 to 302 is disordered; the sequence is RQGRVIDHDSSGSMEKKKREGYF.

It belongs to the PAPS reductase family. CysD subfamily. Heterodimer composed of CysD, the smaller subunit, and CysN.

It catalyses the reaction sulfate + ATP + H(+) = adenosine 5'-phosphosulfate + diphosphate. The protein operates within sulfur metabolism; hydrogen sulfide biosynthesis; sulfite from sulfate: step 1/3. Its function is as follows. With CysN forms the ATP sulfurylase (ATPS) that catalyzes the adenylation of sulfate producing adenosine 5'-phosphosulfate (APS) and diphosphate, the first enzymatic step in sulfur assimilation pathway. APS synthesis involves the formation of a high-energy phosphoric-sulfuric acid anhydride bond driven by GTP hydrolysis by CysN coupled to ATP hydrolysis by CysD. In Shewanella amazonensis (strain ATCC BAA-1098 / SB2B), this protein is Sulfate adenylyltransferase subunit 2.